The following is a 279-amino-acid chain: MQKYLEKANVLIEALPYIRKFNSKIILIKYGGSAMENEELKHCVMQDIALLKLVGLKPIIVHGGGKDISAMCEKLGVKSEFKNGLRVSDKATTEVASMVLNHINKNLVHSLQNLGVKAIGLCGKDGALLECVKKDENLAFVGTIQKVNSKILEELLEKDFLPIIAPIGMDENFNTYNINADDVACAIAKALRAEKLAFLTDTAGLYEDFNDKNSLISKISLEQAKILAPKIEGGMHVKLKSCIDACENGVKKVHILDGRVKHSLLLEFFTDEGIGTLVG.

Residues 64 to 65, R86, and N177 contribute to the substrate site; that span reads GG.

This sequence belongs to the acetylglutamate kinase family. ArgB subfamily.

It is found in the cytoplasm. The catalysed reaction is N-acetyl-L-glutamate + ATP = N-acetyl-L-glutamyl 5-phosphate + ADP. It functions in the pathway amino-acid biosynthesis; L-arginine biosynthesis; N(2)-acetyl-L-ornithine from L-glutamate: step 2/4. Catalyzes the ATP-dependent phosphorylation of N-acetyl-L-glutamate. This chain is Acetylglutamate kinase, found in Campylobacter jejuni (strain RM1221).